The following is a 206-amino-acid chain: Ras-related protein Rab-7b (206 aa).

A GTP-binding site is contributed by 15 to 22 (GDSGVGKT). Phosphoserine is present on residues Ser17 and Ser23. A phosphothreonine mark is found at Thr34, Thr40, and Thr64. GTP contacts are provided by residues 34–40 (TQQYRAT) and 63–67 (DTAGQ). Residues 37–45 (YRATVGADF) carry the Effector region motif. Ser72 is subject to Phosphoserine. A phosphotyrosine mark is found at Tyr78 and Tyr88. Residues 125–128 (NKLD) and 157–158 (AK) each bind GTP. 2 S-geranylgeranyl cysteine lipidation sites follow: Cys205 and Cys206.

The protein belongs to the small GTPase superfamily. Rab family. Post-translationally, glycosylated.

It is found in the cytoplasm. The protein localises to the cytoskeleton. This Paramecium octaurelia protein is Ras-related protein Rab-7b.